Here is a 217-residue protein sequence, read N- to C-terminus: Somatotropin (217 aa).

The signal sequence occupies residues 1 to 26 (MATGSRTSLLLAFGLLCLPWLQEGSA). Zn(2+) is bound at residue histidine 44. Cysteine 79 and cysteine 191 are disulfide-bonded. Phosphoserine is present on serine 132. The residue at position 163 (glutamine 163) is a Deamidated glutamine; by deterioration. Serine 176 carries the phosphoserine modification. Residue asparagine 178 is modified to Deamidated asparagine; by deterioration. Glutamate 200 contacts Zn(2+). A disulfide bond links cysteine 208 and cysteine 215.

It belongs to the somatotropin/prolactin family. Monomer, dimer, trimer, tetramer and pentamer, disulfide-linked or non-covalently associated, in homomeric and heteromeric combinations. Can also form a complex either with GHBP or with the alpha2-macroglobulin complex.

It is found in the secreted. In terms of biological role, plays an important role in growth control. Its major role in stimulating body growth is to stimulate the liver and other tissues to secrete IGF1. It stimulates both the differentiation and proliferation of myoblasts. It also stimulates amino acid uptake and protein synthesis in muscle and other tissues. The polypeptide is Somatotropin (GH1) (Homo sapiens (Human)).